We begin with the raw amino-acid sequence, 1465 residues long: DNA polymerase III PolC-type (1465 aa).

The Exonuclease domain occupies 427–583; it reads YVVFDVETTG…YDAEATGRLL (157 aa).

The protein belongs to the DNA polymerase type-C family. PolC subfamily.

Its subcellular location is the cytoplasm. The enzyme catalyses DNA(n) + a 2'-deoxyribonucleoside 5'-triphosphate = DNA(n+1) + diphosphate. In terms of biological role, required for replicative DNA synthesis. This DNA polymerase also exhibits 3' to 5' exonuclease activity. The polypeptide is DNA polymerase III PolC-type (Streptococcus pyogenes serotype M6 (strain ATCC BAA-946 / MGAS10394)).